Consider the following 350-residue polypeptide: Erythronate-4-phosphate dehydrogenase (350 aa).

Residues S45 and T66 each contribute to the substrate site. NAD(+)-binding positions include 124–125 (QV), D144, 203–205 (ASR), and D226. R205 is an active-site residue. E231 is a catalytic residue. Catalysis depends on H248, which acts as the Proton donor. G251 provides a ligand contact to NAD(+).

It belongs to the D-isomer specific 2-hydroxyacid dehydrogenase family. PdxB subfamily. As to quaternary structure, homodimer.

It is found in the cytoplasm. The catalysed reaction is 4-phospho-D-erythronate + NAD(+) = (R)-3-hydroxy-2-oxo-4-phosphooxybutanoate + NADH + H(+). It functions in the pathway cofactor biosynthesis; pyridoxine 5'-phosphate biosynthesis; pyridoxine 5'-phosphate from D-erythrose 4-phosphate: step 2/5. Functionally, catalyzes the oxidation of erythronate-4-phosphate to 3-hydroxy-2-oxo-4-phosphonooxybutanoate. The sequence is that of Erythronate-4-phosphate dehydrogenase from Legionella pneumophila subsp. pneumophila (strain Philadelphia 1 / ATCC 33152 / DSM 7513).